Reading from the N-terminus, the 567-residue chain is DNA ligase B (567 aa).

Catalysis depends on lysine 132, which acts as the N6-AMP-lysine intermediate.

This sequence belongs to the NAD-dependent DNA ligase family. LigB subfamily.

The catalysed reaction is NAD(+) + (deoxyribonucleotide)n-3'-hydroxyl + 5'-phospho-(deoxyribonucleotide)m = (deoxyribonucleotide)n+m + AMP + beta-nicotinamide D-nucleotide.. Catalyzes the formation of phosphodiester linkages between 5'-phosphoryl and 3'-hydroxyl groups in double-stranded DNA using NAD as a coenzyme and as the energy source for the reaction. The polypeptide is DNA ligase B (Yersinia pestis).